A 342-amino-acid polypeptide reads, in one-letter code: N-acetyl-gamma-glutamyl-phosphate reductase (342 aa).

Residue cysteine 149 is part of the active site.

This sequence belongs to the NAGSA dehydrogenase family. Type 1 subfamily.

It is found in the cytoplasm. It carries out the reaction N-acetyl-L-glutamate 5-semialdehyde + phosphate + NADP(+) = N-acetyl-L-glutamyl 5-phosphate + NADPH + H(+). It participates in amino-acid biosynthesis; L-arginine biosynthesis; N(2)-acetyl-L-ornithine from L-glutamate: step 3/4. Functionally, catalyzes the NADPH-dependent reduction of N-acetyl-5-glutamyl phosphate to yield N-acetyl-L-glutamate 5-semialdehyde. The sequence is that of N-acetyl-gamma-glutamyl-phosphate reductase from Thiobacillus denitrificans (strain ATCC 25259 / T1).